Reading from the N-terminus, the 162-residue chain is Lipid droplet assembly factor 1-A (162 aa).

The Cytoplasmic segment spans residues 1 to 42 (MASAENLYQEKMQELQKQMNKVMQTINNHSKVEAFLNSPFGQ). A helical membrane pass occupies residues 43 to 63 (YLDQHPFVTLSLLVFISLSAV). Over 64–65 (PV) the chain is Lumenal. The chain crosses the membrane as a helical span at residues 66–86 (GIFLTLIAGTAIAVCLAVLII). Residue Glu87 is a topological domain, cytoplasmic. The helical transmembrane segment at 88 to 108 (GIVISVGGIALLCILCGLAVM) threads the bilayer. Ser109 is a topological domain (lumenal). Residues 110–130 (LGVAAVLCVSYVAGSSVLNYI) form a helical membrane-spanning segment. Residues 131–162 (HAYRVTVGTRGRSGPISLNHETTTAEKSYRSS) are Cytoplasmic-facing.

This sequence belongs to the LDAF1 family.

Its subcellular location is the endoplasmic reticulum membrane. The protein resides in the lipid droplet. In terms of biological role, plays an important role in the formation of lipid droplets (LD) which are storage organelles at the center of lipid and energy homeostasis. The polypeptide is Lipid droplet assembly factor 1-A (Xenopus laevis (African clawed frog)).